The primary structure comprises 122 residues: Small ribosomal subunit protein uS13 (122 aa).

Residues 99-122 (RGQRTHTNARTRKGPAKAIAGKKK) are disordered.

The protein belongs to the universal ribosomal protein uS13 family. In terms of assembly, part of the 30S ribosomal subunit. Forms a loose heterodimer with protein S19. Forms two bridges to the 50S subunit in the 70S ribosome.

Its function is as follows. Located at the top of the head of the 30S subunit, it contacts several helices of the 16S rRNA. In the 70S ribosome it contacts the 23S rRNA (bridge B1a) and protein L5 of the 50S subunit (bridge B1b), connecting the 2 subunits; these bridges are implicated in subunit movement. Contacts the tRNAs in the A and P-sites. The sequence is that of Small ribosomal subunit protein uS13 from Sinorhizobium medicae (strain WSM419) (Ensifer medicae).